The following is a 78-amino-acid chain: Acyl carrier protein (78 aa).

Residues 2–77 (QNIEKKIKKI…SIFDIIKKYV (76 aa)) enclose the Carrier domain. At S37 the chain carries O-(pantetheine 4'-phosphoryl)serine.

This sequence belongs to the acyl carrier protein (ACP) family. 4'-phosphopantetheine is transferred from CoA to a specific serine of apo-ACP by AcpS. This modification is essential for activity because fatty acids are bound in thioester linkage to the sulfhydryl of the prosthetic group.

Its subcellular location is the cytoplasm. It functions in the pathway lipid metabolism; fatty acid biosynthesis. Carrier of the growing fatty acid chain in fatty acid biosynthesis. This Buchnera aphidicola subsp. Baizongia pistaciae (strain Bp) protein is Acyl carrier protein.